A 434-amino-acid polypeptide reads, in one-letter code: Enolase (434 aa).

Gln-163 lines the (2R)-2-phosphoglycerate pocket. Residue Glu-205 is the Proton donor of the active site. Positions 242, 291, and 318 each coordinate Mg(2+). Residues Lys-343, Arg-372, Ser-373, and Lys-394 each contribute to the (2R)-2-phosphoglycerate site. The Proton acceptor role is filled by Lys-343.

The protein belongs to the enolase family. Requires Mg(2+) as cofactor.

It localises to the cytoplasm. The protein resides in the secreted. It is found in the cell surface. The enzyme catalyses (2R)-2-phosphoglycerate = phosphoenolpyruvate + H2O. It participates in carbohydrate degradation; glycolysis; pyruvate from D-glyceraldehyde 3-phosphate: step 4/5. Catalyzes the reversible conversion of 2-phosphoglycerate (2-PG) into phosphoenolpyruvate (PEP). It is essential for the degradation of carbohydrates via glycolysis. This Streptococcus gordonii (strain Challis / ATCC 35105 / BCRC 15272 / CH1 / DL1 / V288) protein is Enolase.